A 241-amino-acid chain; its full sequence is Probable transcriptional regulatory protein azo0574 (241 aa).

Positions 1 to 21 are disordered; it reads MAGHSKWANIQHRKGRQDAKR.

Belongs to the TACO1 family.

It is found in the cytoplasm. This Azoarcus sp. (strain BH72) protein is Probable transcriptional regulatory protein azo0574.